The sequence spans 94 residues: PqqA binding protein (94 aa).

This sequence belongs to the PqqD family. As to quaternary structure, monomer. Interacts with PqqE.

Its pathway is cofactor biosynthesis; pyrroloquinoline quinone biosynthesis. Functionally, functions as a PqqA binding protein and presents PqqA to PqqE, in the pyrroloquinoline quinone (PQQ) biosynthetic pathway. The sequence is that of PqqA binding protein from Acinetobacter baumannii (strain SDF).